The sequence spans 332 residues: D-lactate dehydrogenase (332 aa).

Residues 155 to 156 (RI), D175, 206 to 207 (VP), N212, 233 to 235 (FAR), and D259 each bind NAD(+). R235 is a catalytic residue. E264 is a catalytic residue. H296 (proton donor) is an active-site residue.

Belongs to the D-isomer specific 2-hydroxyacid dehydrogenase family.

The catalysed reaction is (R)-lactate + NAD(+) = pyruvate + NADH + H(+). The chain is D-lactate dehydrogenase (ldhD) from Lactiplantibacillus plantarum (strain ATCC BAA-793 / NCIMB 8826 / WCFS1) (Lactobacillus plantarum).